Reading from the N-terminus, the 340-residue chain is ATPase get3 (340 aa).

Residue 34-41 (KGGVGKTT) coordinates ATP. Asp63 is an active-site residue. ATP contacts are provided by Glu245 and Asn272. Zn(2+)-binding residues include Cys283 and Cys286.

It belongs to the arsA ATPase family. Homodimer.

The protein resides in the cytoplasm. Its subcellular location is the endoplasmic reticulum. Functionally, ATPase required for the post-translational delivery of tail-anchored (TA) proteins to the endoplasmic reticulum. Recognizes and selectively binds the transmembrane domain of TA proteins in the cytosol. This complex then targets to the endoplasmic reticulum by membrane-bound receptors, where the tail-anchored protein is released for insertion. This process is regulated by ATP binding and hydrolysis. ATP binding drives the homodimer towards the closed dimer state, facilitating recognition of newly synthesized TA membrane proteins. ATP hydrolysis is required for insertion. Subsequently, the homodimer reverts towards the open dimer state, lowering its affinity for the membrane-bound receptor, and returning it to the cytosol to initiate a new round of targeting. The chain is ATPase get3 (get3) from Talaromyces marneffei (strain ATCC 18224 / CBS 334.59 / QM 7333) (Penicillium marneffei).